The primary structure comprises 384 residues: MFFFGDASTRPQIKFLCLFIYFIYMEEIFEKSQLENEQPTSKEPEPALKPVDVMSIKNAAQYVNQKLSAKGYFSNKPNKLRQLLLLSLDSSQLIPENAENFEISEKVYENDRNVMNIIYSLLNSAEISKQFKETALKKMADKDAEIELLKNEVEKLNKKVDEKERNIQSLQLDKIKSDLQAKHYQAMLNNVNAKNKEQERTFRLYAEEVKRELRRNEMEVDRLESRLSNMNKRRASPRDDAEAEPKRQKFDNDRFLSLVKENSHLQHDLNKLVGVLLRLQKFLKSFGQLNSNSKVPSTFIPTDSELLAIDHHNFDLQKYDLILFDLLKPLNGDSIDDTFKFKKNNQTDKDQEIASLRNRLSEMEQNYERVLATMEQWKTYRKQK.

Coiled coils occupy residues 132–236 (KETA…RRAS) and 342–379 (KKNN…QWKT). A disordered region spans residues 224–247 (ESRLSNMNKRRASPRDDAEAEPKR). The segment covering 236 to 247 (SPRDDAEAEPKR) has biased composition (basic and acidic residues).

Belongs to the ADIP family.

It localises to the preautophagosomal structure membrane. Specifically required for selective degradation of peroxisomes via macropexophagy. The protein is Autophagy-related protein 25 (ATG25) of Pichia angusta (Yeast).